The sequence spans 322 residues: Polyisoprenyl-teichoic acid--peptidoglycan teichoic acid transferase TagT (322 aa).

Topologically, residues methionine 1–lysine 19 are cytoplasmic. Residues valine 20–phenylalanine 40 traverse the membrane as a helical; Signal-anchor for type II membrane protein segment. Residues valine 41 to valine 322 are Extracellular-facing.

The protein belongs to the LytR/CpsA/Psr (LCP) family. As to quaternary structure, interacts with MreB.

Its subcellular location is the cell membrane. The protein operates within cell wall biogenesis. May catalyze the final step in cell wall teichoic acid biosynthesis, the transfer of the anionic cell wall polymers (APs) from their lipid-linked precursor to the cell wall peptidoglycan (PG). The sequence is that of Polyisoprenyl-teichoic acid--peptidoglycan teichoic acid transferase TagT from Bacillus subtilis (strain 168).